We begin with the raw amino-acid sequence, 361 residues long: D-alanine--D-alanine ligase (361 aa).

One can recognise an ATP-grasp domain in the interval 134–344 (KLLLKSFDIP…FKDLVDNLID (211 aa)). 167-222 (KEVLGYPVIVKPAVLGSSIGINVAYSENQIESFIKEALKYDLTIVIEKFIEAREIE) serves as a coordination point for ATP. Mg(2+) is bound by residues D297, E311, and N313.

Belongs to the D-alanine--D-alanine ligase family. It depends on Mg(2+) as a cofactor. Requires Mn(2+) as cofactor.

The protein resides in the cytoplasm. The enzyme catalyses 2 D-alanine + ATP = D-alanyl-D-alanine + ADP + phosphate + H(+). It functions in the pathway cell wall biogenesis; peptidoglycan biosynthesis. Its function is as follows. Cell wall formation. In Borreliella burgdorferi (strain ZS7) (Borrelia burgdorferi), this protein is D-alanine--D-alanine ligase.